Consider the following 131-residue polypeptide: Large ribosomal subunit protein bL17 (131 aa).

Belongs to the bacterial ribosomal protein bL17 family. In terms of assembly, part of the 50S ribosomal subunit. Contacts protein L32.

This is Large ribosomal subunit protein bL17 from Cupriavidus pinatubonensis (strain JMP 134 / LMG 1197) (Cupriavidus necator (strain JMP 134)).